The chain runs to 201 residues: Holliday junction branch migration complex subunit RuvA (201 aa).

Residues 1 to 63 (MIEYIKGEIA…EDAYVLYGFA (63 aa)) form a domain I region. The interval 64–142 (DKQERELFLL…TGAMAATAVG (79 aa)) is domain II. Residues 143–153 (GAAGALLPAMN) form a flexible linker region. The tract at residues 153–201 (NAEVQEEAIAALTMLGFAAAPSQKAVLAILKEEPDAPVEKVIKLALKRL) is domain III.

It belongs to the RuvA family. As to quaternary structure, homotetramer. Forms an RuvA(8)-RuvB(12)-Holliday junction (HJ) complex. HJ DNA is sandwiched between 2 RuvA tetramers; dsDNA enters through RuvA and exits via RuvB. An RuvB hexamer assembles on each DNA strand where it exits the tetramer. Each RuvB hexamer is contacted by two RuvA subunits (via domain III) on 2 adjacent RuvB subunits; this complex drives branch migration. In the full resolvosome a probable DNA-RuvA(4)-RuvB(12)-RuvC(2) complex forms which resolves the HJ.

The protein localises to the cytoplasm. The RuvA-RuvB-RuvC complex processes Holliday junction (HJ) DNA during genetic recombination and DNA repair, while the RuvA-RuvB complex plays an important role in the rescue of blocked DNA replication forks via replication fork reversal (RFR). RuvA specifically binds to HJ cruciform DNA, conferring on it an open structure. The RuvB hexamer acts as an ATP-dependent pump, pulling dsDNA into and through the RuvAB complex. HJ branch migration allows RuvC to scan DNA until it finds its consensus sequence, where it cleaves and resolves the cruciform DNA. The polypeptide is Holliday junction branch migration complex subunit RuvA (Bacteroides fragilis (strain ATCC 25285 / DSM 2151 / CCUG 4856 / JCM 11019 / LMG 10263 / NCTC 9343 / Onslow / VPI 2553 / EN-2)).